The chain runs to 580 residues: Small conductance calcium-activated potassium channel protein 2 (580 aa).

2 disordered regions span residues 1 to 68 (MSSC…VSKP) and 88 to 116 (GGGG…KKNQ). A compositionally biased stretch (low complexity) spans 48–61 (SSPSAAAAASSSAP). The span at 88–104 (GGGGGGGGGGGGSGHGS) shows a compositional bias: gly residues. A helical transmembrane segment spans residues 140-160 (LIFGMFGIVVMVIETELSWGA). Position 161 is a phosphotyrosine (Tyr161). The helical transmembrane segment at 169-189 (LALKCLISLSTIILLGLIIVY) threads the bilayer. The chain crosses the membrane as a helical span at residues 215 to 235 (IFFICLEILVCAIHPIPGNYT). The chain crosses the membrane as a helical span at residues 257–277 (IILSIPMFLRLYLIARVMLLH). A helical membrane pass occupies residues 306–326 (LMTICPGTVLLVFSISLWIIA). Residues 346–366 (FLGAMWLISITFLSIGYGDMV) constitute an intramembrane region (pore-forming). The helical transmembrane segment at 375 to 395 (VCLLTGIMGAGCTALVVAVVA) threads the bilayer. The segment at 413 to 489 (DTQLTKRVKN…LVDLAKTQNI (77 aa)) is calmodulin-binding. The span at 551 to 560 (HVTYNAERSR) shows a compositional bias: basic and acidic residues. Residues 551–580 (HVTYNAERSRSSSRRRRSSSTAPPTSSESS) are disordered. Residues 569-580 (SSTAPPTSSESS) are compositionally biased toward low complexity.

It belongs to the potassium channel KCNN family. KCa2.2/KCNN2 subfamily. Homodimer. Heteromultimer with KCNN1 and KCNN3. The complex is composed of 4 channel subunits each of which binds to a calmodulin subunit which regulates the channel activity through calcium-binding. Interacts (via N-terminal domain) with MPP2. As to expression, brain.

The protein resides in the membrane. It localises to the cytoplasm. The protein localises to the myofibril. Its subcellular location is the sarcomere. It is found in the z line. It carries out the reaction K(+)(in) = K(+)(out). With respect to regulation, inhibited by bee venom neurotoxin apamin. Inhibited by UCL 1684 and tetraethylammonium (TEA). Functionally, small conductance calcium-activated potassium channel that mediates the voltage-independent transmembrane transfer of potassium across the cell membrane through a constitutive interaction with calmodulin which binds the intracellular calcium allowing its opening. The current is characterized by a voltage-independent activation, an intracellular calcium concentration increase-dependent activation and a single-channel conductance of about 3 picosiemens. Also presents an inwardly rectifying current, thus reducing its already small outward conductance of potassium ions, which is particularly the case when the membrane potential displays positive values, above + 20 mV. The inward rectification could be due to a blockade of the outward current by intracellular divalent cations such as calcium and magnesium and could also be due to an intrinsic property of the channel pore, independent of intracellular divalent ions. There are three positively charged amino acids in the S6 transmembrane domain, close to the pore, that collectively control the conductance and rectification through an electrostatic mechanism. Additionally, electrostatic contributions from these residues also play an important role in determining the intrinsic open probability of the channel in the absence of calcium, affecting the apparent calcium affinity for activation. Forms an heteromeric complex with calmodulin, which is constitutively associated in a calcium-independent manner. Channel opening is triggered when calcium binds the calmodulin resulting in a rotary movement leading to the formation of the dimeric complex to open the gate. Plays a role in the repolarization phase of cardiac action potential. In Rattus norvegicus (Rat), this protein is Small conductance calcium-activated potassium channel protein 2.